Here is a 227-residue protein sequence, read N- to C-terminus: MSKEIPVITVDGPSGSGKGTLAQQLAQHLEWHYLDSGAMYRVLALAADKHGIAPNAPKQLETLAQNLDVRFISGLEGMPARVFLEGSEVSDSIRREECGNAASKIAALAEVRGALLMRQRAFRKAPGLVTDGRDMGTVVFPEADLKIFLTASPYERARRRYKQLKEKGIGANLKNLEKEIAERDRRDCERNIAPLKSADDAIILDSTNLAIKEVFQQVLPWLSGKNT.

12–20 (GPSGSGKGT) contributes to the ATP binding site.

This sequence belongs to the cytidylate kinase family. Type 1 subfamily.

It localises to the cytoplasm. The catalysed reaction is CMP + ATP = CDP + ADP. It carries out the reaction dCMP + ATP = dCDP + ADP. The sequence is that of Cytidylate kinase from Nitrosococcus oceani (strain ATCC 19707 / BCRC 17464 / JCM 30415 / NCIMB 11848 / C-107).